A 282-amino-acid chain; its full sequence is Centromere protein P (282 aa).

A coiled-coil region spans residues 1 to 80 (MEQKYEEDIQ…KDLRRQTEIN (80 aa)).

This sequence belongs to the CENP-P/CTF19 family.

It is found in the nucleus. Its subcellular location is the chromosome. It localises to the centromere. In terms of biological role, probable component of a centromeric complex involved in assembly of kinetochore proteins, mitotic progression and chromosome segregation. The chain is Centromere protein P (cenpp) from Danio rerio (Zebrafish).